A 163-amino-acid chain; its full sequence is Aspartate carbamoyltransferase regulatory chain (163 aa).

4 residues coordinate Zn(2+): Cys113, Cys118, Cys143, and Cys146.

It belongs to the PyrI family. As to quaternary structure, contains catalytic and regulatory chains. Zn(2+) is required as a cofactor.

In terms of biological role, involved in allosteric regulation of aspartate carbamoyltransferase. This is Aspartate carbamoyltransferase regulatory chain from Caldivirga maquilingensis (strain ATCC 700844 / DSM 13496 / JCM 10307 / IC-167).